The following is a 298-amino-acid chain: Protoheme IX farnesyltransferase (298 aa).

9 helical membrane-spanning segments follow: residues 28–48, 50–70, 95–117, 121–138, 149–169, 176–196, 222–242, 243–263, and 274–294; these read VVAL…EELV, LKVL…AAAI, LSPA…TLYA, PLTA…AVVY, NIVI…TSVT, AVLL…ALAV, CIFL…LIGM, TGMI…AYAW, and AFNM…ILLV.

This sequence belongs to the UbiA prenyltransferase family. Protoheme IX farnesyltransferase subfamily.

Its subcellular location is the cell inner membrane. It carries out the reaction heme b + (2E,6E)-farnesyl diphosphate + H2O = Fe(II)-heme o + diphosphate. It functions in the pathway porphyrin-containing compound metabolism; heme O biosynthesis; heme O from protoheme: step 1/1. Converts heme B (protoheme IX) to heme O by substitution of the vinyl group on carbon 2 of heme B porphyrin ring with a hydroxyethyl farnesyl side group. The chain is Protoheme IX farnesyltransferase from Idiomarina loihiensis (strain ATCC BAA-735 / DSM 15497 / L2-TR).